Here is a 185-residue protein sequence, read N- to C-terminus: Ribosome-recycling factor (185 aa).

This sequence belongs to the RRF family.

It localises to the cytoplasm. Responsible for the release of ribosomes from messenger RNA at the termination of protein biosynthesis. May increase the efficiency of translation by recycling ribosomes from one round of translation to another. This Ehrlichia ruminantium (strain Welgevonden) protein is Ribosome-recycling factor.